Consider the following 432-residue polypeptide: Neuropeptide FF receptor 1 (432 aa).

The Extracellular segment spans residues 1–43 (MEAEPSQPPNGSWPLGQNGSDVETSMATSLTFSSYYQHSSPVA). Residues Asn-10 and Asn-18 are each glycosylated (N-linked (GlcNAc...) asparagine). A helical transmembrane segment spans residues 44-64 (AMFIAAYVLIFLLCMVGNTLV). The Cytoplasmic portion of the chain corresponds to 65-80 (CFIVLKNRHMRTVTNM). Residues 81-101 (FILNLAVSDLLVGIFCMPTTL) form a helical membrane-spanning segment. Residues 102–117 (VDNLITGWPFDNATCK) are Extracellular-facing. Asn-113 carries an N-linked (GlcNAc...) asparagine glycan. The cysteines at positions 116 and 203 are disulfide-linked. The helical transmembrane segment at 118–138 (MSGLVQGMSVSASVFTLVAIA) threads the bilayer. The Cytoplasmic portion of the chain corresponds to 139-158 (VERFRCIVHPFREKLTLRKA). The chain crosses the membrane as a helical span at residues 159-179 (LFTIAVIWALALLIMCPSAVT). At 180–214 (LTVTREEHHFMLDARNRSYPLYSCWEAWPEKGMRK) the chain is on the extracellular side. Asn-195 is a glycosylation site (N-linked (GlcNAc...) asparagine). A helical membrane pass occupies residues 215–235 (VYTAVLFAHIYLVPLALIVVM). Residues 236–273 (YVRIARKLCQAPGPARDTEEAVAEGGRTSRRRARVVHM) lie on the Cytoplasmic side of the membrane. A helical transmembrane segment spans residues 274-294 (LVMVALFFTLSWLPLWVLLLL). Over 295 to 309 (IDYGELSELQLHLLS) the chain is Extracellular. The chain crosses the membrane as a helical span at residues 310-330 (VYAFPLAHWLAFFHSSANPII). Topologically, residues 331-432 (YGYFNENFRR…MPLTIPAWNI (102 aa)) are cytoplasmic. Residues 380 to 406 (PSDSGLPSESGPSSGVPGPGRLPLRNG) show a composition bias toward low complexity. Residues 380–422 (PSDSGLPSESGPSSGVPGPGRLPLRNGRVAHQDGPGEGPGCNH) form a disordered region.

The protein belongs to the G-protein coupled receptor 1 family. Expressed at high levels in the hypothalamus. Moderate levels found in the midbrain, thalamus, medulla oblongata, testis, eye, whole brain, cerebral cortex, striatum, hippocampus, cerebellum, optic nerve, placenta, spinal cord, pituitary gland and ovary.

Its subcellular location is the cell membrane. Receptor for NPAF (A-18-F-amide) and NPFF (F-8-F-amide) neuropeptides, also known as morphine-modulating peptides. Can also be activated by a variety of naturally occurring or synthetic FMRF-amide like ligands. This receptor mediates its action by association with G proteins that activate a phosphatidylinositol-calcium second messenger system. The polypeptide is Neuropeptide FF receptor 1 (Npffr1) (Rattus norvegicus (Rat)).